The primary structure comprises 266 residues: Nickel import ATP-binding protein NikE (266 aa).

Residues I4–E252 enclose the ABC transporter domain. ATP is bound at residue G45–S52.

This sequence belongs to the ABC transporter superfamily. Nickel importer (TC 3.A.1.5.3) family. The complex is composed of two ATP-binding proteins (NikD and NikE), two transmembrane proteins (NikB and NikC) and a solute-binding protein (NikA).

The protein localises to the cell inner membrane. It carries out the reaction Ni(2+)(out) + ATP + H2O = Ni(2+)(in) + ADP + phosphate + H(+). Functionally, part of the ABC transporter complex NikABCDE involved in nickel import. Responsible for energy coupling to the transport system. This Brucella suis biovar 1 (strain 1330) protein is Nickel import ATP-binding protein NikE.